The chain runs to 293 residues: Large ribosomal subunit protein uL4 (293 aa).

Composition is skewed to basic and acidic residues over residues 1-14 (MAEE…EKTP) and 33-55 (KTTE…ESTK). Disordered regions lie at residues 1-72 (MAEE…IKSE) and 130-166 (QRQG…STRS).

The protein belongs to the universal ribosomal protein uL4 family. In terms of assembly, part of the 50S ribosomal subunit.

One of the primary rRNA binding proteins, this protein initially binds near the 5'-end of the 23S rRNA. It is important during the early stages of 50S assembly. It makes multiple contacts with different domains of the 23S rRNA in the assembled 50S subunit and ribosome. Its function is as follows. Forms part of the polypeptide exit tunnel. The chain is Large ribosomal subunit protein uL4 from Mycoplasma mobile (strain ATCC 43663 / 163K / NCTC 11711) (Mesomycoplasma mobile).